The sequence spans 430 residues: MRVGIKVLGCPKNEADCEVLAGVLREGGHEIVFDVKDADVVVLDTCAFIEDAKRESIDEIFSFVDAKDQYGYKLVVKGCLVQRYYEELKKEIPEVDQWIGVADPEEIANAIENGTDLVPDQPETVYRYRKRIDLEERPYAYVKISDGCDRGCTFCSIPSFKGSLRSRSIEDITREVEDLLKEGKKEIILVAQDTTSYGIDLYRKQALPDLLRRLNSLNGEFWIRVMYLHPDHLTEEIISAMLELDKVVKYFDVPVQHGSDKILKLMGRTKSSEELKKMLSSIRERFPDAVLRTSIIVGFPGETEEDFEELKQFVEEIQFDKLGAFVYSDEEGTVAFNLKEKVDPEMAKRRQEELLLLQAEISNSRLDRFVGKKLKFLVEGKEGKFLVGRTWTEAPEVDGVVFVRGKGKIGDFLEVVIKEHDEYDMWGSVI.

In terms of domain architecture, MTTase N-terminal spans 1 to 116; it reads MRVGIKVLGC…IANAIENGTD (116 aa). Residues cysteine 10, cysteine 46, cysteine 79, cysteine 148, cysteine 152, and cysteine 155 each contribute to the [4Fe-4S] cluster site. The region spanning 134–365 is the Radical SAM core domain; that stretch reads LEERPYAYVK…LLQAEISNSR (232 aa). Positions 367-430 constitute a TRAM domain; it reads DRFVGKKLKF…DEYDMWGSVI (64 aa).

This sequence belongs to the methylthiotransferase family. RimO subfamily. In terms of assembly, monomer. [4Fe-4S] cluster serves as cofactor.

The protein localises to the cytoplasm. The enzyme catalyses L-aspartate(89)-[ribosomal protein uS12]-hydrogen + (sulfur carrier)-SH + AH2 + 2 S-adenosyl-L-methionine = 3-methylsulfanyl-L-aspartate(89)-[ribosomal protein uS12]-hydrogen + (sulfur carrier)-H + 5'-deoxyadenosine + L-methionine + A + S-adenosyl-L-homocysteine + 2 H(+). In terms of biological role, catalyzes the methylthiolation of an aspartic acid residue of ribosomal protein uS12. This Thermotoga maritima (strain ATCC 43589 / DSM 3109 / JCM 10099 / NBRC 100826 / MSB8) protein is Ribosomal protein uS12 methylthiotransferase RimO.